A 59-amino-acid chain; its full sequence is Large ribosomal subunit protein uL30 (59 aa).

Belongs to the universal ribosomal protein uL30 family. In terms of assembly, part of the 50S ribosomal subunit.

This chain is Large ribosomal subunit protein uL30, found in Actinobacillus pleuropneumoniae serotype 7 (strain AP76).